Here is a 702-residue protein sequence, read N- to C-terminus: Putative methyltransferase NSUN7 (702 aa).

Catalysis depends on Cys424, which acts as the Nucleophile. Disordered regions lie at residues 522-541, 567-593, and 675-702; these read KSSK…TKAA, ETVT…KHKL, and PTPS…RRWL. Basic residues predominate over residues 523–534; that stretch reads SSKREKKKKKSK. The segment covering 567-587 has biased composition (polar residues); that stretch reads ETVTKPSLPQKNTAQVGASSQ. Positions 681-691 are enriched in basic and acidic residues; the sequence is RKGEKPKDDTR.

It belongs to the class I-like SAM-binding methyltransferase superfamily. RsmB/NOP family.

Its function is as follows. May have S-adenosyl-L-methionine-dependent methyl-transferase activity. The chain is Putative methyltransferase NSUN7 (NSUN7) from Macaca fascicularis (Crab-eating macaque).